The following is a 107-amino-acid chain: Large ribosomal subunit protein P1 (107 aa).

The segment covering 67–82 (PTATSAAAAPAAGEAS) has biased composition (low complexity). The interval 67–107 (PTATSAAAAPAAGEASGKAEEKKKEEPEEEGDDDMGFGLFD) is disordered. A compositionally biased stretch (basic and acidic residues) spans 83–92 (GKAEEKKKEE).

It belongs to the eukaryotic ribosomal protein P1/P2 family. P1 and P2 exist as dimers at the large ribosomal subunit.

In terms of biological role, plays an important role in the elongation step of protein synthesis. This Leishmania peruviana protein is Large ribosomal subunit protein P1.